The following is a 361-amino-acid chain: Solute carrier family 25 member 3 (361 aa).

The transit peptide at 1–49 (MFSSVAHLARANPFNTPHLQLVHDGLGDFRSRPPGPTGQPRRPRNLAAA) directs the protein to the mitochondrion. Residues 25 to 44 (GLGDFRSRPPGPTGQPRRPR) are disordered. Topologically, residues 50–62 (AVEEYSCEFGSAK) are mitochondrial intermembrane. 3 Solcar repeats span residues 62–146 (KYYA…FKVL), 159–243 (WRTS…TVEA), and 260–338 (EQLV…VKVY). Residues 63–85 (YYALCGFGGVLSCGLTHTAVVPL) traverse the membrane as a helical segment. The Mitochondrial matrix portion of the chain corresponds to 86–120 (DLVKCRMQVDPQKYKGIFNGFSVTLKEDGVRGLAK). Lys-98 carries the post-translational modification N6-acetyllysine. Lys-111 bears the N6-methyllysine mark. The helical transmembrane segment at 121-140 (GWAPTFLGYSMQGLCKFGFY) threads the bilayer. The Mitochondrial intermembrane segment spans residues 141-160 (EVFKVLYSNMLGEENTYLWR). The chain crosses the membrane as a helical span at residues 161–182 (TSLYLAASASAEFFADIALAPM). Residues 183 to 217 (EAAKVRIQTQPGYANTLRDAAPKMYKEEGLKAFYK) are Mitochondrial matrix-facing. Tyr-195 carries the post-translational modification Phosphotyrosine. Residue Lys-208 is modified to N6-acetyllysine. A helical transmembrane segment spans residues 218–237 (GVAPLWMRQIPYTMMKFACF). The Mitochondrial intermembrane segment spans residues 238 to 260 (ERTVEALYKFVVPKPRSECSKPE). The chain crosses the membrane as a helical span at residues 261–283 (QLVVTFVAGYIAGVFCAIVSHPA). At 284-313 (DSVVSVLNKEKGSSASLVLKRLGFKGVWKG) the chain is on the mitochondrial matrix side. A helical transmembrane segment spans residues 314–332 (LFARIIMIGTLTALQWFIY). Residues 333–361 (DSVKVYFRLPRPPPPEMPESLKKKLGLTQ) are Mitochondrial intermembrane-facing.

Belongs to the mitochondrial carrier (TC 2.A.29) family. Interacts with PPIF; the interaction is impaired by CsA.

It localises to the mitochondrion inner membrane. It catalyses the reaction phosphate(in) + H(+)(in) = phosphate(out) + H(+)(out). Inorganic ion transporter that transports phosphate or copper ions across the mitochondrial inner membrane into the matrix compartment. Mediates proton-coupled symport of phosphate ions necessary for mitochondrial oxidative phosphorylation of ADP to ATP. Transports copper ions probably in the form of anionic copper(I) complexes to maintain mitochondrial matrix copper pool and to supply copper for cytochrome C oxidase complex assembly. May also play a role in regulation of the mitochondrial permeability transition pore (mPTP). In Pongo abelii (Sumatran orangutan), this protein is Solute carrier family 25 member 3.